The chain runs to 356 residues: MKVQQYRLDELAHLVKGELIGEGSLQFSNLASLENAEVNHLTFVNGEKHLDQAKVSRAGAYIVTAALKEHLPEKDNFIIVDNPYLAFAILTHVFDKKISSTGIESTAQIHPSAVISETAYIGHYVVIGENCVVGDNTVIQSHTKLDDNVEVGKDCFIDSHVTITGGSKLRDRVRIHSSTVIGGEGFGFAPYQGKWHRIAQLGSVLIGNDVRIGSNCSIDRGALDNTILEDGVIIDNLVQIAHNVHIGSNTAIAAKCGIAGSTKIGKNCILAGACGVAGHLSIADNVTLTGMSMVTKNISEAGTYSSGTGLFENNHWKKTIVRLRQLADVPLTQITKRLDHIQAQIESLESTFNLRK.

The Proton acceptor role is filled by His242.

It belongs to the transferase hexapeptide repeat family. LpxD subfamily. In terms of assembly, homotrimer.

The catalysed reaction is a UDP-3-O-[(3R)-3-hydroxyacyl]-alpha-D-glucosamine + a (3R)-hydroxyacyl-[ACP] = a UDP-2-N,3-O-bis[(3R)-3-hydroxyacyl]-alpha-D-glucosamine + holo-[ACP] + H(+). The protein operates within bacterial outer membrane biogenesis; LPS lipid A biosynthesis. Functionally, catalyzes the N-acylation of UDP-3-O-acylglucosamine using 3-hydroxyacyl-ACP as the acyl donor. Is involved in the biosynthesis of lipid A, a phosphorylated glycolipid that anchors the lipopolysaccharide to the outer membrane of the cell. The chain is UDP-3-O-acylglucosamine N-acyltransferase from Acinetobacter baumannii (strain AB307-0294).